We begin with the raw amino-acid sequence, 572 residues long: Myb-like protein Y (572 aa).

Over residues glutamine 196 to glutamine 211 the composition is skewed to polar residues. A disordered region spans residues glutamine 196 to glutamate 283. 2 stretches are compositionally biased toward low complexity: residues threonine 222–threonine 237 and asparagine 260–asparagine 281. One can recognise a Myb-like domain in the interval proline 311–leucine 360. The disordered stretch occupies residues lysine 367 to proline 456. Composition is skewed to low complexity over residues glutamine 371–threonine 392 and serine 414–glutamate 425. Positions serine 426 to histidine 435 are enriched in basic and acidic residues. A compositionally biased stretch (low complexity) spans aspartate 436–threonine 455.

This Dictyostelium discoideum (Social amoeba) protein is Myb-like protein Y (mybY).